Consider the following 597-residue polypeptide: Spastin (597 aa).

The Cytoplasmic segment spans residues methionine 1–phenylalanine 20. An intramembrane region (helical) is located at residues leucine 21–tryptophan 37. Over serine 38–alanine 597 the chain is Cytoplasmic. Residues arginine 56–glycine 80 form a disordered region. The region spanning histidine 91–leucine 168 is the MIT domain. The interval serine 193–valine 289 is disordered. The span at serine 214 to arginine 231 shows a compositional bias: polar residues. Positions serine 232–serine 252 are enriched in low complexity.

Belongs to the AAA ATPase family. Spastin subfamily. In terms of assembly, homohexamer. The homohexamer is stabilized by ATP-binding. The homohexamer may adopt a ring conformation through which microtubules pass prior to being severed. Interacts with microtubules.

The protein localises to the membrane. It localises to the cytoplasm. Its subcellular location is the cytoskeleton. The protein resides in the microtubule organizing center. It is found in the centrosome. It catalyses the reaction n ATP + n H2O + a microtubule = n ADP + n phosphate + (n+1) alpha/beta tubulin heterodimers.. Its function is as follows. ATP-dependent microtubule severing protein. Microtubule severing may promote reorganization of cellular microtubule arrays and the release of microtubules from the microtubule organizing center following nucleation. This is Spastin from Nematostella vectensis (Starlet sea anemone).